We begin with the raw amino-acid sequence, 325 residues long: Melanocortin receptor 5 (325 aa).

Topologically, residues 1 to 37 (MNSSSTLTVLNLTLNASEDGILGSNVKNKSLACEEMG) are extracellular. N-linked (GlcNAc...) asparagine glycans are attached at residues Asn-2, Asn-11, Asn-15, and Asn-28. A helical transmembrane segment spans residues 38 to 61 (IAVEVFLTLGLVSLLENILVIGAI). Over 62–73 (VKNKNLHSPMYF) the chain is Cytoplasmic. A helical membrane pass occupies residues 74–97 (FVGSLAVADMLVSMSNAWETVTIY). Residues 98-114 (LLNNKHLVIADTFVRHI) are Extracellular-facing. The helical transmembrane segment at 115–138 (DNVFDSMICISVVASMCSLLAIAV) threads the bilayer. Over 139–155 (DRYITIFYALRYHHIMT) the chain is Cytoplasmic. The chain crosses the membrane as a helical span at residues 156–179 (ARRSGVIIACIWTFCISCGIVFII). Residues 180–186 (YYESKYV) lie on the Extracellular side of the membrane. Residues 187–211 (IICLISMFFTMLFFMVSLYIHMFLL) traverse the membrane as a helical segment. At 212–239 (ARNHVKRIAASPRYNSVRQRTSMKGAIT) the chain is on the cytoplasmic side. A helical membrane pass occupies residues 240-265 (LTMLLGIFIVCWSPFFLHLILMISCP). At 266–273 (QNVYCSCF) the chain is on the extracellular side. The helical transmembrane segment at 274 to 297 (MSYFNMYLILIMCNSVIDPLIYAL) threads the bilayer. Residues 298–325 (RSQEMRRTFKEIVCCHGFRRPCRLLGGY) are Cytoplasmic-facing. 2 S-palmitoyl cysteine lipidation sites follow: Cys-311 and Cys-312.

The protein belongs to the G-protein coupled receptor 1 family. As to expression, skin, adrenal gland, skeletal muscle, bone marrow, spleen, thymus, gonads, uterus and brain.

Its subcellular location is the cell membrane. Functionally, receptor for MSH (alpha, beta and gamma) and ACTH. The activity of this receptor is mediated by G proteins which activate adenylate cyclase. This receptor is a possible mediator of the immunomodulation properties of melanocortins. The sequence is that of Melanocortin receptor 5 (Mc5r) from Mus musculus (Mouse).